The sequence spans 283 residues: Zip homologous protein 4 (283 aa).

The RING-type zinc-finger motif lies at 6 to 50; sequence CFRCYKFPSKQIEFYLTNCMHMFCIECERLCHPPEEEPLKCIQCS. Disordered regions lie at residues 149–175 and 201–283; these read KKQLAEQAPPPQTPPRSNSLKVASSRS and TKAQ…RNSQ. A compositionally biased stretch (polar residues) spans 163-175; sequence PRSNSLKVASSRS. A compositionally biased stretch (low complexity) spans 202-216; that stretch reads KAQAKAEAEAEAPAK. The segment covering 220–235 has biased composition (polar residues); it reads SKAQTTKCTSNYQSHP. The span at 267–283 shows a compositional bias: basic and acidic residues; sequence KKHEAQREKHKEHRNSQ.

As to quaternary structure, interacts with zhp-3; the interaction is required for their localization along paired chromosomes and stability, and for the formation of chiasma during meiotic recombination. As to expression, expressed in the germline.

It localises to the chromosome. Recruited co-dependently with zhp-3 to the synaptonemal complex between homologous chromosome pairs to regulate the formation and number of crossover events between homologs during meiotic recombination. In the early stages of pachytene, in complex with zhp-4, recruited by the zhp-1-zhp-2 heterodimer to designated crossover sites along the recombination intermediate to stabilize other pro-crossover factors such as rmh-1, msh-5 and cosa-1. This in turn facilitates crossover and promotes the formation of chiasma in each meiotic nucleus at the late pachytene stage of meiosis. Negatively regulates double strand break formation to promote formation of the crossover intermediate. In Caenorhabditis elegans, this protein is Zip homologous protein 4.